The chain runs to 144 residues: Intraflagellar transport protein 25 homolog (144 aa).

Ca(2+) is bound by residues Asn-29, Asp-32, and Thr-37.

This sequence belongs to the IFT25 family. As to quaternary structure, component of the IFT complex B, at least composed of IFT20, IFT22, IFT25, IFT27, IFT46, IFT52, TRAF3IP1/IFT54, IFT57, IFT74, IFT80, IFT81, and IFT88. Interacts with IFT27. Interacts with IFT88. Detected in placenta.

The protein resides in the cell projection. It is found in the cilium. Its function is as follows. Component of the IFT complex B required for sonic hedgehog/SHH signaling. May mediate transport of SHH components: required for the export of SMO and PTCH1 receptors out of the cilium and the accumulation of GLI2 at the ciliary tip in response to activation of the SHH pathway, suggesting it is involved in the dynamic transport of SHH signaling molecules within the cilium. Not required for ciliary assembly. Its role in intraflagellar transport is mainly seen in tissues rich in ciliated cells such as kidney and testis. Essential for male fertility, spermiogenesis and sperm flagella formation. Plays a role in the early development of the kidney. May be involved in the regulation of ureteric bud initiation. In Homo sapiens (Human), this protein is Intraflagellar transport protein 25 homolog.